Here is a 356-residue protein sequence, read N- to C-terminus: Probable farnesyl diphosphate synthase DDB_G0278823 (356 aa).

Isopentenyl diphosphate-binding residues include K55, R58, and Q94. Mg(2+) contacts are provided by D101 and D105. A dimethylallyl diphosphate-binding site is contributed by R110. R111 contributes to the isopentenyl diphosphate binding site. The dimethylallyl diphosphate site is built by K203, T204, Q243, K260, and K269.

The protein belongs to the FPP/GGPP synthase family. Mg(2+) serves as cofactor.

Its subcellular location is the cytoplasm. The catalysed reaction is isopentenyl diphosphate + dimethylallyl diphosphate = (2E)-geranyl diphosphate + diphosphate. The enzyme catalyses isopentenyl diphosphate + (2E)-geranyl diphosphate = (2E,6E)-farnesyl diphosphate + diphosphate. The protein operates within isoprenoid biosynthesis; farnesyl diphosphate biosynthesis; farnesyl diphosphate from geranyl diphosphate and isopentenyl diphosphate: step 1/1. Its pathway is isoprenoid biosynthesis; geranyl diphosphate biosynthesis; geranyl diphosphate from dimethylallyl diphosphate and isopentenyl diphosphate: step 1/1. Inhibited by aminobisphosphonate drugs (aBP), such as risedronate and alendronate. Key enzyme in isoprenoid biosynthesis which catalyzes the formation of farnesyl diphosphate (FPP), a sterol precursor. The polypeptide is Probable farnesyl diphosphate synthase DDB_G0278823 (Dictyostelium discoideum (Social amoeba)).